The sequence spans 555 residues: Potassium-transporting ATPase potassium-binding subunit (555 aa).

The next 10 helical transmembrane spans lie at 2–22, 60–80, 130–150, 173–193, 246–266, 278–298, 374–394, 412–432, 483–503, and 525–545; these read IWVAVVITMLLFILVAKPTGI, QYALSLVLLNGFMIVVVYFIF, IGITFLMFAAPATTLAIVMAF, VFLPIAFIAALVFVALGVPQT, MSNILQMMLMMLLPTALPFTY, ILFVSLFMVFLLGFITITTSE, AGFVNIIMYAIIAVFISGLMV, LIAVTILFHPLLILGFSALAL, LVMFLGRYFSLITMLAVAASL, and GIFIGTIVIVGALTFFPMLVL.

The protein belongs to the KdpA family. In terms of assembly, the system is composed of three essential subunits: KdpA, KdpB and KdpC.

The protein resides in the cell membrane. In terms of biological role, part of the high-affinity ATP-driven potassium transport (or Kdp) system, which catalyzes the hydrolysis of ATP coupled with the electrogenic transport of potassium into the cytoplasm. This subunit binds the extracellular potassium ions and delivers the ions to the membrane domain of KdpB through an intramembrane tunnel. In Bacillus mycoides (strain KBAB4) (Bacillus weihenstephanensis), this protein is Potassium-transporting ATPase potassium-binding subunit.